The primary structure comprises 306 residues: Small ribosomal subunit protein uS2 (306 aa).

The segment at 257 to 306 (EGDKKDETAAAAEVQTSAETEKVADAEKPAEAVAEAEAEAPAADADAEQA) is disordered. Residues 275-286 (ETEKVADAEKPA) are compositionally biased toward basic and acidic residues. Positions 287–300 (EAVAEAEAEAPAAD) are enriched in low complexity.

The protein belongs to the universal ribosomal protein uS2 family.

This chain is Small ribosomal subunit protein uS2, found in Streptomyces griseus subsp. griseus (strain JCM 4626 / CBS 651.72 / NBRC 13350 / KCC S-0626 / ISP 5235).